We begin with the raw amino-acid sequence, 513 residues long: Cytochrome P450 monooxygenase eqxH (513 aa).

The chain crosses the membrane as a helical span at residues 13–32; that stretch reads QYAILCGITVFTLFIVQLSL. N-linked (GlcNAc...) asparagine glycans are attached at residues asparagine 130 and asparagine 295. Cysteine 449 lines the heme pocket.

Belongs to the cytochrome P450 family. The cofactor is heme.

It is found in the membrane. It functions in the pathway mycotoxin biosynthesis. Cytochrome P450 monooxygenase; part of the gene cluster that mediates the biosynthesis of equisetin, a trans-fused decalin-containing tetramic acid with antimicrobial activity. The PKS module of eqxS together with the enoylreductase eqxC catalyze the formation of the polyketide unit which is then conjugated to L-serine by the condensation domain of the eqxS NRPS module. Activity of the Dieckmann cyclase domain (RED) results in release of the Dieckmann product intermediate. Diels-Alderase eqx3 is involved in endo-selective Diels-Alder cycloaddition to form the decalin ring, leading to the production of N-desmethylequisetin also called trichosetin. Subsequent N-methylation is carried out by eqxD to give equisetin. This is Cytochrome P450 monooxygenase eqxH from Fusarium heterosporum.